The primary structure comprises 749 residues: Probable serine/threonine-protein kinase drkC (749 aa).

The first 31 residues, 1-31 (MIIINKYIRMNKIAILFSFFILICCTGYSIS), serve as a signal peptide directing secretion. Over 32–423 (YKINGINENK…TSPNYQKIIY (392 aa)) the chain is Extracellular. The tract at residues 124–153 (DRTDQVSTSSSSSSFSEENKKSSSDDSAPA) is disordered. Positions 130-139 (STSSSSSSFS) are enriched in low complexity. Residues Asn-157, Asn-189, Asn-283, Asn-358, Asn-373, Asn-381, and Asn-397 are each glycosylated (N-linked (GlcNAc...) asparagine). A helical transmembrane segment spans residues 424–444 (IVVGVGIAVLLIIAVGIYFII). The Cytoplasmic portion of the chain corresponds to 445-749 (RLRIKNKRLN…QEIVKRLEAM (305 aa)). Residues 491–749 (IVVQNRIGRG…QEIVKRLEAM (259 aa)) form the Protein kinase domain. Residues 497–505 (IGRGSCAEV) and Lys-518 contribute to the ATP site. The Proton acceptor role is filled by Asp-615.

Belongs to the protein kinase superfamily. TKL Ser/Thr protein kinase family.

Its subcellular location is the membrane. It carries out the reaction L-seryl-[protein] + ATP = O-phospho-L-seryl-[protein] + ADP + H(+). The catalysed reaction is L-threonyl-[protein] + ATP = O-phospho-L-threonyl-[protein] + ADP + H(+). The sequence is that of Probable serine/threonine-protein kinase drkC (drkC) from Dictyostelium discoideum (Social amoeba).